Reading from the N-terminus, the 68-residue chain is Conotoxin Mr3.4 (68 aa).

A signal peptide spans 1 to 19 (MSKLGVLLTICLLLFPLTA). The propeptide occupies 20 to 49 (VPLDGDQPADRPAERMQDDISSERHPFFDR). Disulfide bonds link Cys-53/Cys-67, Cys-54/Cys-63, and Cys-59/Cys-66. A 4-hydroxyproline modification is found at Pro-65.

It belongs to the conotoxin M superfamily. Expressed by the venom duct.

Its subcellular location is the secreted. This chain is Conotoxin Mr3.4, found in Conus marmoreus (Marble cone).